A 508-amino-acid polypeptide reads, in one-letter code: MKFNFWKGLWKPKSLTPTLSHRLYRRMYTPQPPLNREMTVLDRSKFTVSLNLALAKFPDPKYIAQFAKECKADILQLRSINHVQKTDDNGRAVLLRHDLDLEGGEDVASKVMSQLSPRGKELLTEAQADITKIVKDLDYDFWRADEIFYSVLPVTEKDEIPSGFSMVGHVAHLNLRSEWKDYDRLIGQVILDKNPRVKTVVNKVDSIDTKFRTFKMDVLAGEDNTEVEQHESGCRFQFDFAKVYWNSRLHTEHDRLVSLFRGEASSRERKQQERAKRENHEKSTETAVEPDNTPATAVCDVFAGVGPFAVPSGRTSLFVMANDLNPYSYEALEHNVKLNKVSEYVKCFNLDGAEYVQQSMKLLDEHRRTQPTINPVQVRKRKAGQPVVKQDIPNHYSHYVMNLPDSAIEFLWSFKGLYTTVDGLSQDTPLPHVHVHCFHKWEAGEEEPSKEETKAALLERVYKQIDVRLDPNEVGMHWVRKVSPKKDMFCISFELPKEVAWAPQVNKE.

The N-terminal 53 residues, 1–53 (MKFNFWKGLWKPKSLTPTLSHRLYRRMYTPQPPLNREMTVLDRSKFTVSLNLA), are a transit peptide targeting the mitochondrion. Residue His253 coordinates S-adenosyl-L-methionine. A compositionally biased stretch (basic and acidic residues) spans 267-284 (RERKQQERAKRENHEKST). The interval 267–291 (RERKQQERAKRENHEKSTETAVEPD) is disordered. S-adenosyl-L-methionine-binding positions include 323-324 (DL), 351-352 (DG), and Asn402.

The protein belongs to the class I-like SAM-binding methyltransferase superfamily. TRM5/TYW2 family. As to quaternary structure, monomer.

The protein resides in the mitochondrion matrix. The protein localises to the nucleus. It is found in the cytoplasm. It catalyses the reaction guanosine(37) in tRNA + S-adenosyl-L-methionine = N(1)-methylguanosine(37) in tRNA + S-adenosyl-L-homocysteine + H(+). In terms of biological role, specifically methylates the N1 position of guanosine-37 in various cytoplasmic and mitochondrial tRNAs. Methylation is not dependent on the nature of the nucleoside 5' of the target nucleoside. This is the first step in the biosynthesis of wybutosine (yW), a modified base adjacent to the anticodon of tRNAs and required for accurate decoding. The sequence is that of tRNA (guanine(37)-N(1))-methyltransferase from Yarrowia lipolytica (strain CLIB 122 / E 150) (Yeast).